The sequence spans 294 residues: tRNA pseudouridine synthase B (294 aa).

The active-site Nucleophile is Asp39.

Belongs to the pseudouridine synthase TruB family. Type 1 subfamily.

It carries out the reaction uridine(55) in tRNA = pseudouridine(55) in tRNA. Responsible for synthesis of pseudouridine from uracil-55 in the psi GC loop of transfer RNAs. The sequence is that of tRNA pseudouridine synthase B from Streptococcus pyogenes serotype M6 (strain ATCC BAA-946 / MGAS10394).